The sequence spans 152 residues: D-aminoacyl-tRNA deacylase (152 aa).

A Gly-cisPro motif, important for rejection of L-amino acids motif is present at residues 142-143 (GP).

It belongs to the DTD family. As to quaternary structure, homodimer.

It localises to the cytoplasm. The enzyme catalyses glycyl-tRNA(Ala) + H2O = tRNA(Ala) + glycine + H(+). The catalysed reaction is a D-aminoacyl-tRNA + H2O = a tRNA + a D-alpha-amino acid + H(+). An aminoacyl-tRNA editing enzyme that deacylates mischarged D-aminoacyl-tRNAs. Also deacylates mischarged glycyl-tRNA(Ala), protecting cells against glycine mischarging by AlaRS. Acts via tRNA-based rather than protein-based catalysis; rejects L-amino acids rather than detecting D-amino acids in the active site. By recycling D-aminoacyl-tRNA to D-amino acids and free tRNA molecules, this enzyme counteracts the toxicity associated with the formation of D-aminoacyl-tRNA entities in vivo and helps enforce protein L-homochirality. The protein is D-aminoacyl-tRNA deacylase of Paraburkholderia phymatum (strain DSM 17167 / CIP 108236 / LMG 21445 / STM815) (Burkholderia phymatum).